Consider the following 630-residue polypeptide: 1-deoxy-D-xylulose-5-phosphate synthase (630 aa).

Thiamine diphosphate contacts are provided by residues His-72 and 113–115 (GHS). Residue Asp-144 participates in Mg(2+) binding. Thiamine diphosphate-binding positions include 145-146 (GA), Asn-173, Tyr-284, and Glu-367. Asn-173 is a binding site for Mg(2+).

The protein belongs to the transketolase family. DXPS subfamily. In terms of assembly, homodimer. Requires Mg(2+) as cofactor. Thiamine diphosphate serves as cofactor.

It catalyses the reaction D-glyceraldehyde 3-phosphate + pyruvate + H(+) = 1-deoxy-D-xylulose 5-phosphate + CO2. The protein operates within metabolic intermediate biosynthesis; 1-deoxy-D-xylulose 5-phosphate biosynthesis; 1-deoxy-D-xylulose 5-phosphate from D-glyceraldehyde 3-phosphate and pyruvate: step 1/1. Its function is as follows. Catalyzes the acyloin condensation reaction between C atoms 2 and 3 of pyruvate and glyceraldehyde 3-phosphate to yield 1-deoxy-D-xylulose-5-phosphate (DXP). The chain is 1-deoxy-D-xylulose-5-phosphate synthase from Bacillus cereus (strain G9842).